The primary structure comprises 431 residues: MSKWTPAADEKNQGTLEFEIARAQVEEGLEQAFQRNKNEVSIPGFRKGKVTKQLFFQKFGEEALYQQAMDIVLPAAYEAAIDEAGITPVGRPNIEPVSMNKGEAWTLKAVVKTAPAIKLGEYLNLEVEAQDEEVADADVDAEIKRLQDGQAELVLQEESVKAENGDTVVIDFDGSVDGVKFDGGQGKDFSLALGSGQFIPGFEEQLVGHTAGEDVNVNVTFPEDYQAADLAGKEALFEVTIHELKRKELPELDDEFAKDVDEEVETLAELKEKTSKKLADEKAQAAKAAFEDAVISKAVDNASVDGDEIPAEMIDEDVHRQIDQYLGQLQQQGISREMFFQISGQTEDDLHKQFEEGAETRVKTGLILEAIVAAEKIDPSAEQVSEEVASLAAQYNMEEDKVRAAISESMLKHDIAMREAIKKVTDSAKAV.

The PPIase FKBP-type domain occupies 165–250; the sequence is GDTVVIDFDG…IHELKRKELP (86 aa).

Belongs to the FKBP-type PPIase family. Tig subfamily.

The protein localises to the cytoplasm. The enzyme catalyses [protein]-peptidylproline (omega=180) = [protein]-peptidylproline (omega=0). Its function is as follows. Involved in protein export. Acts as a chaperone by maintaining the newly synthesized protein in an open conformation. Functions as a peptidyl-prolyl cis-trans isomerase. This chain is Trigger factor, found in Leuconostoc mesenteroides subsp. mesenteroides (strain ATCC 8293 / DSM 20343 / BCRC 11652 / CCM 1803 / JCM 6124 / NCDO 523 / NBRC 100496 / NCIMB 8023 / NCTC 12954 / NRRL B-1118 / 37Y).